A 614-amino-acid polypeptide reads, in one-letter code: DBH-like monooxygenase protein 1 homolog (614 aa).

Residues 1-22 (MSENKLFCAIVFLTSLFCSTCS) form the signal peptide. Residues 23–593 (QGTRFVHSAA…CRKDSAIQCE (571 aa)) lie on the Lumenal side of the membrane. The 114-residue stretch at 37–150 (RRYNIKWGFD…STVRVIWAFH (114 aa)) folds into the DOMON domain. Asparagine 116 carries an N-linked (GlcNAc...) asparagine glycan. Tyrosine 205 is a catalytic residue. Disulfide bonds link cysteine 207–cysteine 259 and cysteine 244–cysteine 271. Histidine 237 and histidine 238 together coordinate Cu cation. Asparagine 249 is a glycosylation site (N-linked (GlcNAc...) asparagine). Residues histidine 309, histidine 391, and histidine 393 each contribute to the Cu cation site. Cystine bridges form between cysteine 366/cysteine 482, cysteine 370/cysteine 552, and cysteine 445/cysteine 467. The active site involves histidine 391. N-linked (GlcNAc...) asparagine glycosylation is present at asparagine 454. Position 466 (methionine 466) interacts with Cu cation. Residue asparagine 519 is glycosylated (N-linked (GlcNAc...) asparagine). Residues 594-612 (HSLALLLTACLLLILQTCL) traverse the membrane as a helical segment.

This sequence belongs to the copper type II ascorbate-dependent monooxygenase family. It depends on Cu(2+) as a cofactor.

The protein resides in the endoplasmic reticulum membrane. This Danio rerio (Zebrafish) protein is DBH-like monooxygenase protein 1 homolog (moxd1).